Here is a 1317-residue protein sequence, read N- to C-terminus: ABC transporter C family member 14 (1317 aa).

In terms of domain architecture, ABC transmembrane type-1 1 spans 119-404; sequence NKYALISNIF…LPEDIYKAIG (286 aa). A run of 5 helical transmembrane segments spans residues 127-147, 156-176, 249-269, 341-361, and 375-395; these read IFIT…INYI, SILK…GQSI, ILIL…VGFG, VLFW…VLVS, and LDVT…LIYL. Residues 426–451 are disordered; it reads ENNQNINFNNNNNNNNNNKNNNNNDD. Over residues 427-449 the composition is skewed to low complexity; that stretch reads NNQNINFNNNNNNNNNNKNNNNN. The 221-residue stretch at 490-710 folds into the ABC transporter 1 domain; sequence ENEENIKINE…ISDKNDPNLI (221 aa). 522 to 529 is a binding site for ATP; that stretch reads GVVGSGKT. 5 helical membrane-spanning segments follow: residues 734-754, 778-798, 871-891, 969-989, and 992-1012; these read YFSY…FFIG, DSFY…LLMI, LISI…LFII, LEVM…LFTS, and GLAA…SWGV. The 284-residue stretch at 744–1027 folds into the ABC transmembrane type-1 2 domain; the sequence is LFITISLFFI…LEVKMNSFQR (284 aa). The 236-residue stretch at 1071 to 1306 folds into the ABC transporter 2 domain; sequence IEFKNVEIKY…PNSKFNKLIK (236 aa). 1105–1112 provides a ligand contact to ATP; it reads GRTGAGKT.

It belongs to the ABC transporter superfamily. ABCC family. Conjugate transporter (TC 3.A.1.208) subfamily.

The protein localises to the membrane. In Dictyostelium discoideum (Social amoeba), this protein is ABC transporter C family member 14 (abcC14).